A 95-amino-acid polypeptide reads, in one-letter code: Aspartyl/glutamyl-tRNA(Asn/Gln) amidotransferase subunit C (95 aa).

Belongs to the GatC family. Heterotrimer of A, B and C subunits.

It carries out the reaction L-glutamyl-tRNA(Gln) + L-glutamine + ATP + H2O = L-glutaminyl-tRNA(Gln) + L-glutamate + ADP + phosphate + H(+). The catalysed reaction is L-aspartyl-tRNA(Asn) + L-glutamine + ATP + H2O = L-asparaginyl-tRNA(Asn) + L-glutamate + ADP + phosphate + 2 H(+). Allows the formation of correctly charged Asn-tRNA(Asn) or Gln-tRNA(Gln) through the transamidation of misacylated Asp-tRNA(Asn) or Glu-tRNA(Gln) in organisms which lack either or both of asparaginyl-tRNA or glutaminyl-tRNA synthetases. The reaction takes place in the presence of glutamine and ATP through an activated phospho-Asp-tRNA(Asn) or phospho-Glu-tRNA(Gln). The chain is Aspartyl/glutamyl-tRNA(Asn/Gln) amidotransferase subunit C from Pseudomonas paraeruginosa (strain DSM 24068 / PA7) (Pseudomonas aeruginosa (strain PA7)).